A 149-amino-acid polypeptide reads, in one-letter code: Deoxyuridine 5'-triphosphate nucleotidohydrolase (149 aa).

Substrate-binding positions include arginine 68–glycine 70, asparagine 81, threonine 85–aspartate 87, and lysine 95.

The protein belongs to the dUTPase family. Mg(2+) serves as cofactor.

It carries out the reaction dUTP + H2O = dUMP + diphosphate + H(+). It participates in pyrimidine metabolism; dUMP biosynthesis; dUMP from dCTP (dUTP route): step 2/2. In terms of biological role, this enzyme is involved in nucleotide metabolism: it produces dUMP, the immediate precursor of thymidine nucleotides and it decreases the intracellular concentration of dUTP so that uracil cannot be incorporated into DNA. The sequence is that of Deoxyuridine 5'-triphosphate nucleotidohydrolase from Bdellovibrio bacteriovorus (strain ATCC 15356 / DSM 50701 / NCIMB 9529 / HD100).